The primary structure comprises 441 residues: Glutamyl-tRNA reductase (441 aa).

Substrate is bound by residues 49 to 52 (TCNR), Ser-109, 114 to 116 (EGQ), and Gln-120. Cys-50 functions as the Nucleophile in the catalytic mechanism. 198 to 203 (GAGRMS) contacts NADP(+).

This sequence belongs to the glutamyl-tRNA reductase family. In terms of assembly, homodimer.

The catalysed reaction is (S)-4-amino-5-oxopentanoate + tRNA(Glu) + NADP(+) = L-glutamyl-tRNA(Glu) + NADPH + H(+). Its pathway is porphyrin-containing compound metabolism; protoporphyrin-IX biosynthesis; 5-aminolevulinate from L-glutamyl-tRNA(Glu): step 1/2. It functions in the pathway porphyrin-containing compound metabolism; chlorophyll biosynthesis. Functionally, catalyzes the NADPH-dependent reduction of glutamyl-tRNA(Glu) to glutamate 1-semialdehyde (GSA). This chain is Glutamyl-tRNA reductase, found in Prochlorococcus marinus (strain NATL1A).